Reading from the N-terminus, the 387-residue chain is Protein REVEILLE 1 (387 aa).

Polar residues-rich tracts occupy residues 1–17 (MASS…NASL) and 27–37 (KQIQFNDQSFG). The disordered stretch occupies residues 1–44 (MASSPLTANVQGTNASLRNRDEETADKQIQFNDQSFGGNDYAPK). In terms of domain architecture, HTH myb-type spans 50-104 (TITKERERWTDEEHKKFVEALKLYGRAWRRIEEHVGSKTAVQIRSHAQKFFSKVA). A DNA-binding region (H-T-H motif) is located at residues 77–100 (WRRIEEHVGSKTAVQIRSHAQKFF). 3 disordered regions span residues 105 to 200 (REAT…TANA), 306 to 334 (KAVQ…TTEP), and 350 to 387 (AFSE…HLHL). Basic residues predominate over residues 124 to 134 (RPKRKPAHPYP). Residues 141 to 166 (ADQTSRSVSPSERDTQSPTSVLSTVG) are compositionally biased toward polar residues. Low complexity-rich tracts occupy residues 172 to 200 (SLDS…TANA) and 312 to 323 (GSSTGSNTGSVD). The span at 324-333 (DTGHTEKTTE) shows a compositional bias: basic and acidic residues.

It is found in the nucleus. In terms of biological role, morning-phased transcription factor integrating the circadian clock and auxin pathways. Binds to the evening element (EE) of promoters. Does not act within the central clock, but regulates free auxin levels in a time-of-day specific manner. Positively regulates the expression of YUC8 during the day, but has no effect during the night. Negative regulator of freezing tolerance. The protein is Protein REVEILLE 1 (RVE1) of Arabidopsis thaliana (Mouse-ear cress).